Reading from the N-terminus, the 258-residue chain is UPF0246 protein Sden_2729 (258 aa).

The protein belongs to the UPF0246 family.

This is UPF0246 protein Sden_2729 from Shewanella denitrificans (strain OS217 / ATCC BAA-1090 / DSM 15013).